The chain runs to 371 residues: Bifunctional chorismate mutase/prephenate dehydratase (371 aa).

In terms of domain architecture, Chorismate mutase spans 1–92 (MTLKNALLAF…DSVLTQKKWI (92 aa)). Substrate contacts are provided by R11, R28, K39, D48, E52, S84, and Q88. The Prephenate dehydratase domain maps to 104–284 (KISFLGSFGS…NITQFIILAQ (181 aa)). The tract at residues 285 to 371 (KKTYITNKKT…IKCIKILGCF (87 aa)) is regulatory.

The protein resides in the cytoplasm. It catalyses the reaction chorismate = prephenate. The enzyme catalyses prephenate + H(+) = 3-phenylpyruvate + CO2 + H2O. It participates in amino-acid biosynthesis; L-phenylalanine biosynthesis; phenylpyruvate from prephenate: step 1/1. The protein operates within metabolic intermediate biosynthesis; prephenate biosynthesis; prephenate from chorismate: step 1/1. Catalyzes the Claisen rearrangement of chorismate to prephenate and the decarboxylation/dehydration of prephenate to phenylpyruvate. The polypeptide is Bifunctional chorismate mutase/prephenate dehydratase (pheA) (Buchnera aphidicola subsp. Baizongia pistaciae (strain Bp)).